Consider the following 352-residue polypeptide: Putative squamosa promoter-binding-like protein 19 (352 aa).

A disordered region spans residues 68-88; the sequence is AAAPATRRARGGSGGGGGGGG. Positions 78–88 are enriched in gly residues; the sequence is GGSGGGGGGGG. The SBP-type zinc finger occupies 90–167; sequence AEACSVDGCR…DGHNRRRRKP (78 aa). Residues cysteine 93, cysteine 98, cysteine 115, histidine 118, cysteine 134, cysteine 137, histidine 141, and cysteine 153 each contribute to the Zn(2+) site. The Bipartite nuclear localization signal signature appears at 150-166; the sequence is KKSCRKRLDGHNRRRRK. A disordered region spans residues 152-174; that stretch reads SCRKRLDGHNRRRRKPQHDALNP.

Its subcellular location is the nucleus. Its function is as follows. Trans-acting factor that binds specifically to the consensus nucleotide sequence 5'-TNCGTACAA-3'. This chain is Putative squamosa promoter-binding-like protein 19 (SPL19), found in Oryza sativa subsp. japonica (Rice).